Consider the following 361-residue polypeptide: MTGSHRTSHAGDGAPEDDLGTFQTLEQFILDRQDSFPHSTGAFSRLLRDISLAAKIVNRDMRRAGLLDVYGSTGERNVQGEVQQKMDALAHREFVQALRRGGECCLIGSEEHAEAIPLSTVSKEGDGKYIVLLDPLDGSSNIDVNVSVGTIFSIYRLPDGYEEEEPDPAAALQPGTEQVAAGYVVYGSSTMLVYTTGNGVNGFTLDPSIGEFLLSHPDIQTPSRGRLSSINSGYYHSFEEGLRDYLDWLQQKDPETNRPAKTRYIGSFVSDFHRNLLKGGIYMYPATESSPAGKLRLMYEANPMGFIAEQAGGAASDGHRRILEKEPDKLHQRTPLFIGSEEMVRRAEAFLQGEPERALSA.

Residues Glu-110, Asp-134, Leu-136, and Asp-137 each contribute to the Mg(2+) site. Substrate-binding positions include 137–140 (DGSS), Asn-231, Tyr-264, and Lys-294. Residue Glu-300 participates in Mg(2+) binding.

Belongs to the FBPase class 1 family. As to quaternary structure, homotetramer. Mg(2+) is required as a cofactor.

The protein localises to the cytoplasm. The enzyme catalyses beta-D-fructose 1,6-bisphosphate + H2O = beta-D-fructose 6-phosphate + phosphate. It participates in carbohydrate biosynthesis; gluconeogenesis. This Salinibacter ruber (strain DSM 13855 / M31) protein is Fructose-1,6-bisphosphatase class 1 2.